The primary structure comprises 574 residues: Thiol:disulfide interchange protein DsbD (574 aa).

The first 19 residues, 1–19 (MAHRILTLILLFCSAHASA), serve as a signal peptide directing secretion. Cys-122 and Cys-128 are oxidised to a cystine. The segment at 147-169 (VKANAATPSAATGEQTRVNSDSP) is disordered. Polar residues predominate over residues 152–169 (ATPSAATGEQTRVNSDSP). 7 helical membrane passes run 173–193 (LPFS…TPCV), 218–238 (LLAF…GLVV), 253–273 (WVLV…FGLF), 306–326 (IAGL…LLYI), 333–353 (WLGG…LILV), 367–387 (WMEQ…VFLL), and 399–419 (LWSV…LNAT). A disulfide bridge connects residues Cys-192 and Cys-314. The 145-residue stretch at 430–574 (LLGAAMICAR…FATHLHNRLR (145 aa)) folds into the Thioredoxin domain. A disulfide bond links Cys-489 and Cys-492.

The protein belongs to the thioredoxin family. DsbD subfamily.

It is found in the cell inner membrane. The catalysed reaction is [protein]-dithiol + NAD(+) = [protein]-disulfide + NADH + H(+). The enzyme catalyses [protein]-dithiol + NADP(+) = [protein]-disulfide + NADPH + H(+). Its function is as follows. Required to facilitate the formation of correct disulfide bonds in some periplasmic proteins and for the assembly of the periplasmic c-type cytochromes. Acts by transferring electrons from cytoplasmic thioredoxin to the periplasm. This transfer involves a cascade of disulfide bond formation and reduction steps. This Cronobacter sakazakii (strain ATCC BAA-894) (Enterobacter sakazakii) protein is Thiol:disulfide interchange protein DsbD.